Here is a 34-residue protein sequence, read N- to C-terminus: MLKMSGWQRQSQNNSRNLRRECSRRKCIFIHHHT.

As to quaternary structure, interacts with DDIT3 (isoform 1).

The protein resides in the nucleus. It localises to the cytoplasm. Its function is as follows. Product of the upstream open reading frame (uORF) of DDIT3/CHOP that is specifically produced in absence of stress, thereby preventing translation of downstream stress effector DDIT3/CHOP. The protein is DDIT3 upstream open reading frame protein of Mus musculus (Mouse).